Reading from the N-terminus, the 168-residue chain is MEKNNNFEMLGYVAWLWANSPLHRNWSLSLLAINVLPAIQYGQYTLLMRDGVPIAFCSWANLSLENEIKYLEDVSSLVYDDWNSGDRKWFIDWIAPFGHNYVLYKHMRKSFPYDLFRSIRVYKGSSEGKITEFHGGKVDKQLANKIFQQYHFELINELKNKSEVISIN.

Residues His-23 and Asp-92 contribute to the active site.

The protein belongs to the RTX toxin acyltransferase family.

The protein localises to the cytoplasm. It catalyses the reaction a fatty acyl-[ACP] + L-lysyl-[protein] = N(6)-(fatty acyl)-L-lysyl-[protein] + holo-[ACP] + H(+). Required for full activity and modification of the LtxA leukotoxin. Involved in fatty acid modification of the protoxin at two internal lysine residues, thereby converting it to the active toxin. The polypeptide is Leukotoxin-activating lysine-acyltransferase LtxC (Aggregatibacter actinomycetemcomitans (Actinobacillus actinomycetemcomitans)).